Reading from the N-terminus, the 250-residue chain is 5-oxoprolinase subunit A (250 aa).

It belongs to the LamB/PxpA family. As to quaternary structure, forms a complex composed of PxpA, PxpB and PxpC.

It carries out the reaction 5-oxo-L-proline + ATP + 2 H2O = L-glutamate + ADP + phosphate + H(+). In terms of biological role, catalyzes the cleavage of 5-oxoproline to form L-glutamate coupled to the hydrolysis of ATP to ADP and inorganic phosphate. The sequence is that of 5-oxoprolinase subunit A from Pseudomonas fluorescens (strain ATCC BAA-477 / NRRL B-23932 / Pf-5).